We begin with the raw amino-acid sequence, 338 residues long: Acyl-CoA-binding domain-containing protein 1 (338 aa).

A helical; Signal-anchor transmembrane segment spans residues 11 to 31 (IIFGLIFAYLLAKLISILLAF). 2 N-linked (GlcNAc...) asparagine glycosylation sites follow: Asn35 and Asn41. The tract at residues 69–89 (AEQGSLRGDEDESDDDDWEGV) is disordered. The span at 77 to 89 (DEDESDDDDWEGV) shows a compositional bias: acidic residues. The region spanning 94-184 (LDEAFSAATA…VTQLYPAWVE (91 aa)) is the ACB domain. An acyl-CoA-binding positions include 126-130 (YGLYK), Lys152, and Tyr171. Asn191 carries N-linked (GlcNAc...) asparagine glycosylation. 4 ANK repeats span residues 217 to 246 (LKID…PVNA), 250 to 279 (EGRT…DVNA), 283 to 312 (EGQT…DTTI), and 316 to 338 (DGNS…KDSN).

The protein belongs to the ACBP family. As to quaternary structure, interacts with RAP2-12. Binds to SMO1-1 and SMO1-2. Glycosylated. In seeds, localized in the outer integument. As to expression, expressed at low levels in roots, stems, leaves, flowers, and siliques, especially within seeds.

It is found in the cell membrane. Its subcellular location is the secreted. It localises to the cell wall. The protein localises to the endoplasmic reticulum membrane. Binds medium- and long-chain acyl-CoA esters with very high affinity. Can interact in vitro with arachidonyl-CoA, barely with oleoyl-CoA, but not with palmitoyl-CoA. Confers tolerance and binds to lead ions Pb(2+), probably by promoting lead translocation from roots to shoots. May function as an intracellular carrier of acyl-CoA esters. Modulates negatively sterol synthesis during embryogenesis and gametophytes development via interactions with SMO1-1 and SMO1-2; sterols serve as lipid modulators for gene expression of homeodomain-leucine zipper IV transcription factors. This is Acyl-CoA-binding domain-containing protein 1 from Arabidopsis thaliana (Mouse-ear cress).